The following is a 397-amino-acid chain: MLQSIHLRFSSTPSPSKRESLIIPSVICSFPFTSSSFRPKQTQKLKRLVQFCAPYEVGGGYTDEELFERYGTQQNQTNVKDKLDPAEYEALLKGGEQVTSVLEEMITLLEDMKMNEASENVAVELAAQGVIGKRVDEMESGFMMALDYMIQLADKDQDEKRKSLLEVVKETVLSHLTKKCPPHVQVIGLLCRTPKKESRHELLRRVAAGGGAFESENGTKLHIPGANLNDIANQADDLLETMETRPAIPDRKLLARLVLIREEARNMMGGGILDERNDRGFTTLPESEVNFLAKLVALKPGKTVQQMIQNVMQGKDEGADNLSKEDDSSTEGRKPSGLNGRGSVTGRKPLPVRPGMFLETVTKVLGSIYSGNASGITAQHLEWVHQKTLQVLEEIAY.

Residues 1 to 52 constitute a chloroplast transit peptide; it reads MLQSIHLRFSSTPSPSKRESLIIPSVICSFPFTSSSFRPKQTQKLKRLVQFC. The span at 315-334 shows a compositional bias: basic and acidic residues; the sequence is KDEGADNLSKEDDSSTEGRK. Residues 315–351 are disordered; sequence KDEGADNLSKEDDSSTEGRKPSGLNGRGSVTGRKPLP.

Interacts with FSD2 and MRL7. As to expression, highly expressed in young leaves, shoots and flowers. Expressed at low levels in stems and siliques.

The protein localises to the plastid. Its subcellular location is the chloroplast stroma. It localises to the chloroplast nucleoid. Functionally, plays an essential role in early steps of chloroplast development. May be involved in the redox control of plastid gene expression by maintening the redox state around chloroplast nucleoids. May positively regulate plastid-encoded RNA polymerase (PEP) activity, through binding to FSD2. The sequence is that of Protein PEP-RELATED DEVELOPMENT ARRESTED 1, chloroplastic (PRDA1) from Arabidopsis thaliana (Mouse-ear cress).